The following is a 178-amino-acid chain: Large ribosomal subunit protein uL10 (178 aa).

Belongs to the universal ribosomal protein uL10 family. Part of the ribosomal stalk of the 50S ribosomal subunit. The N-terminus interacts with L11 and the large rRNA to form the base of the stalk. The C-terminus forms an elongated spine to which L12 dimers bind in a sequential fashion forming a multimeric L10(L12)X complex.

Its function is as follows. Forms part of the ribosomal stalk, playing a central role in the interaction of the ribosome with GTP-bound translation factors. This Mycobacterium tuberculosis (strain ATCC 25177 / H37Ra) protein is Large ribosomal subunit protein uL10.